The following is a 209-amino-acid chain: uncharacterized protein (209 aa).

Disordered regions lie at residues 1–80 (MFVR…PPVE) and 164–197 (LPAGGAGEQEKEPVSRGSSRSSCSQRRPPPPGME). Positions 178–189 (SRGSSRSSCSQR) are enriched in low complexity.

This is an uncharacterized protein from Homo sapiens (Human).